The primary structure comprises 98 residues: uncharacterized protein (98 aa).

This is an uncharacterized protein from Thermotoga maritima (strain ATCC 43589 / DSM 3109 / JCM 10099 / NBRC 100826 / MSB8).